Reading from the N-terminus, the 602-residue chain is Leucine-rich repeat-containing protein 40 (602 aa).

Phosphoserine is present on serine 71. LRR repeat units follow at residues aspartate 83–leucine 104, alanine 106–leucine 127, asparagine 129–leucine 150, asparagine 152–leucine 173, asparagine 175–leucine 196, serine 198–methionine 219, arginine 221–methionine 242, serine 244–serine 265, leucine 266–lysine 286, serine 290–leucine 311, serine 313–histidine 335, leucine 336–lysine 356, threonine 400–alanine 421, isoleucine 426–leucine 447, methionine 450–glutamine 472, lysine 473–leucine 494, arginine 496–isoleucine 517, threonine 519–methionine 540, asparagine 543–cysteine 564, and asparagine 566–methionine 586.

This chain is Leucine-rich repeat-containing protein 40 (LRRC40), found in Homo sapiens (Human).